The chain runs to 374 residues: Cyclin-dependent kinase 9 (374 aa).

In terms of domain architecture, Protein kinase spans 19-318; that stretch reads YEKLAKIGQG…SDDALNHDFF (300 aa). ATP is bound by residues 25-33 and K48; that span reads IGQGTFGEV. D151 acts as the Proton acceptor in catalysis. Positions 345-374 are disordered; that stretch reads PRRRGHMPQQPANQNRNPATTSQSEFDRVF. Residues 354-368 are compositionally biased toward polar residues; it reads QPANQNRNPATTSQS.

Belongs to the protein kinase superfamily. CMGC Ser/Thr protein kinase family. CDC2/CDKX subfamily. Component of the super elongation complex (SEC). Associates with ccnt1/cyclin-T1, ccnt2/cyclin-T2 or ccnk/cyclin-K to form active P-TEFb.

The protein localises to the nucleus. The protein resides in the cytoplasm. Its subcellular location is the PML body. It carries out the reaction L-seryl-[protein] + ATP = O-phospho-L-seryl-[protein] + ADP + H(+). The catalysed reaction is L-threonyl-[protein] + ATP = O-phospho-L-threonyl-[protein] + ADP + H(+). The enzyme catalyses [DNA-directed RNA polymerase] + ATP = phospho-[DNA-directed RNA polymerase] + ADP + H(+). Functionally, protein kinase involved in the regulation of transcription. Member of the cyclin-dependent kinase pair (CDK9/cyclin-T) complex, also called positive transcription elongation factor b (P-TEFb), which facilitates the transition from abortive to productive elongation by phosphorylating the CTD (C-terminal domain) of the large subunit of RNA polymerase II (RNAP II) polr2a, supt5h and rdbp. This complex is inactive when in the 7SK snRNP complex form. Regulates cytokine inducible transcription networks by facilitating promoter recognition of target transcription factors. P-TEFb is also involved in cotranscriptional histone modification, mRNA processing and mRNA export. This chain is Cyclin-dependent kinase 9, found in Danio rerio (Zebrafish).